The primary structure comprises 244 residues: 5-oxoprolinase subunit A (244 aa).

It belongs to the LamB/PxpA family. Forms a complex composed of PxpA, PxpB and PxpC.

It carries out the reaction 5-oxo-L-proline + ATP + 2 H2O = L-glutamate + ADP + phosphate + H(+). Catalyzes the cleavage of 5-oxoproline to form L-glutamate coupled to the hydrolysis of ATP to ADP and inorganic phosphate. This Salmonella newport (strain SL254) protein is 5-oxoprolinase subunit A.